Here is a 284-residue protein sequence, read N- to C-terminus: UDP-N-acetylenolpyruvoylglucosamine reductase (284 aa).

The region spanning 21-180 is the FAD-binding PCMH-type domain; sequence KIGGPARLFV…LKAAFKLKKA (160 aa). Arginine 159 is an active-site residue. The active-site Proton donor is serine 209. The active site involves glutamate 280.

This sequence belongs to the MurB family. FAD serves as cofactor.

The protein resides in the cytoplasm. It carries out the reaction UDP-N-acetyl-alpha-D-muramate + NADP(+) = UDP-N-acetyl-3-O-(1-carboxyvinyl)-alpha-D-glucosamine + NADPH + H(+). The protein operates within cell wall biogenesis; peptidoglycan biosynthesis. In terms of biological role, cell wall formation. This chain is UDP-N-acetylenolpyruvoylglucosamine reductase, found in Pseudothermotoga lettingae (strain ATCC BAA-301 / DSM 14385 / NBRC 107922 / TMO) (Thermotoga lettingae).